The primary structure comprises 681 residues: Proline-rich receptor-like protein kinase PERK8 (681 aa).

Residues 1–11 (MSLVPPLPILS) show a composition bias toward pro residues. The tract at residues 1-231 (MSLVPPLPIL…TLPSSSPGKS (231 aa)) is disordered. Topologically, residues 1–237 (MSLVPPLPIL…PGKSEVGTGG (237 aa)) are extracellular. Asparagine 16 is a glycosylation site (N-linked (GlcNAc...) asparagine). Pro residues predominate over residues 21–163 (APPPLQTQPT…SPPKPSPSTP (143 aa)). Over residues 177–191 (TSASPPSSNPTDPST) the composition is skewed to low complexity. The span at 192 to 201 (LAPPPTPLPV) shows a compositional bias: pro residues. The span at 214–229 (PASNNGNNTLPSSSPG) shows a compositional bias: polar residues. A glycan (N-linked (GlcNAc...) asparagine) is linked at asparagine 220. A helical membrane pass occupies residues 238-258 (IVAIGVIVGLVFLSLFVMGVW). At 259-681 (FTRKRKRKDP…GSRDQSRFVP (423 aa)) the chain is on the cytoplasmic side. Residues 339–617 (FSEKNLLGEG…SQVVRALDTL (279 aa)) form the Protein kinase domain. Residues 345-353 (LGEGGFGCV) and lysine 367 contribute to the ATP site. Tyrosine 412 carries the phosphotyrosine modification. The active-site Proton acceptor is aspartate 463. Phosphoserine occurs at positions 467 and 498. Residues threonine 499 and threonine 504 each carry the phosphothreonine modification. A Phosphotyrosine modification is found at tyrosine 512.

This sequence belongs to the protein kinase superfamily. Ser/Thr protein kinase family. Interacts with KIPK1 and KIPK2 (via its cytosolic domain). Mostly expressed in seedlings, roots, inflorescence bolts and flower buds.

The protein resides in the cell membrane. It catalyses the reaction L-seryl-[protein] + ATP = O-phospho-L-seryl-[protein] + ADP + H(+). The catalysed reaction is L-threonyl-[protein] + ATP = O-phospho-L-threonyl-[protein] + ADP + H(+). Could be involved in the negative regulation of root growth. In Arabidopsis thaliana (Mouse-ear cress), this protein is Proline-rich receptor-like protein kinase PERK8 (PERK8).